The sequence spans 330 residues: Probable NAD(P)H-dependent D-xylose reductase xyl1 (330 aa).

Y50 serves as the catalytic Proton donor. Substrate is bound at residue H112. Residues 166–167 (SN), 215–224 (SSFGPLSFLE), and 271–281 (KSNNPTRLAQN) contribute to the NAD(+) site.

This sequence belongs to the aldo/keto reductase family.

It carries out the reaction xylitol + NAD(+) = D-xylose + NADH + H(+). The catalysed reaction is xylitol + NADP(+) = D-xylose + NADPH + H(+). The protein operates within carbohydrate metabolism; D-xylose degradation. In terms of biological role, catalyzes the initial reaction in the xylose utilization pathway by reducing D-xylose into xylitol. Xylose is a major component of hemicelluloses such as xylan. Most fungi utilize D-xylose via three enzymatic reactions, xylose reductase (XR), xylitol dehydrogenase (XDH), and xylulokinase, to form xylulose 5-phosphate, which enters pentose phosphate pathway. This is Probable NAD(P)H-dependent D-xylose reductase xyl1 (xyl1) from Aspergillus clavatus (strain ATCC 1007 / CBS 513.65 / DSM 816 / NCTC 3887 / NRRL 1 / QM 1276 / 107).